The primary structure comprises 260 residues: ProSAAS (260 aa).

Residues 1 to 33 form the signal peptide; sequence MAGSPLLWGPRAGGVGLLVLLLLGLFRPPPALC. Residues 34–215 form a proSAAS(1-180) region; sequence ARPVKEPRGL…SADSEGVAAP (182 aa). O-linked (GalNAc...) threonine glycosylation is present at threonine 53. A disordered region spans residues 165–188; the sequence is RPRPPVYDDGPAGPDAEEAGDETP. Acidic residues predominate over residues 179–188; it reads DAEEAGDETP. A C-terminal inhibitory domain; interacts with PCSK1 region spans residues 221-260; the sequence is AADHDVGSELPPEGVLGALLRVKRLETPAPQVPARRLLPP. An O-linked (GalNAc...) serine glycan is attached at serine 228. The short motif at 239 to 244 is the Sufficient for inhibition of PCSK1 element; sequence LLRVKR. An O-linked (GalNAc...) threonine glycan is attached at threonine 247.

In terms of assembly, interacts via the C-terminal inhibitory domain with PCSK1 66 kDa form. Post-translationally, proteolytically cleaved in the Golgi. O-glycosylated with a core 1 or possibly core 8 glycan. Expressed in brain and pancreas.

Its subcellular location is the secreted. The protein localises to the golgi apparatus. The protein resides in the trans-Golgi network. May function in the control of the neuroendocrine secretory pathway. Proposed be a specific endogenous inhibitor of PCSK1. ProSAAS and Big PEN-LEN, both containing the C-terminal inhibitory domain, but not the further processed peptides reduce PCSK1 activity in the endoplasmic reticulum and Golgi. It reduces the activity of the 84 kDa form but not the autocatalytically derived 66 kDa form of PCSK1. Subsequent processing of proSAAS may eliminate the inhibition. Slows down convertase-mediated processing of proopiomelanocortin and proenkephalin. May control the intracellular timing of PCSK1 rather than its total level of activity. Its function is as follows. Endogenous ligand for GPR171. Neuropeptide involved in the regulation of feeding. The sequence is that of ProSAAS (PCSK1N) from Homo sapiens (Human).